A 462-amino-acid chain; its full sequence is Integrator complex subunit 12 (462 aa).

Positions 42-132 are disordered; it reads GIDSSYRPSQ…PETQSSPITV (91 aa). Positions 59–86 are enriched in polar residues; sequence ISSTKNISIKQEPKISSSLPSGNNNGKV. Lys68 is covalently cross-linked (Glycyl lysine isopeptide (Lys-Gly) (interchain with G-Cter in SUMO2)). A compositionally biased stretch (basic and acidic residues) spans 88-124; it reads TTEKVKKEAEKRPADKMKSDITEGVDIPKKPRLEKPE. Residue Ser128 is modified to Phosphoserine. The segment at 159–215 adopts a PHD-type zinc-finger fold; that stretch reads GLACVVCRQMMVASGNQLVECQECHNLYHRDCHKPQVTDKEANDPRLVWYCARCTRQ. A Glycyl lysine isopeptide (Lys-Gly) (interchain with G-Cter in SUMO2) cross-link involves residue Lys254. The segment covering 301 to 328 has biased composition (polar residues); it reads SSAGPSTAKLSSTTQNNTGKPATSSANQ. A disordered region spans residues 301-462; the sequence is SSAGPSTAKL…KKAAQKKLKK (162 aa). 2 stretches are compositionally biased toward low complexity: residues 347–358 and 382–437; these read KIGSNNSTTPTV and VSKV…GPTS. Residues 449-462 show a composition bias toward basic residues; it reads QMVKKKAAQKKLKK.

It belongs to the Integrator subunit 12 family. As to quaternary structure, component of the Integrator complex, composed of core subunits INTS1, INTS2, INTS3, INTS4, INTS5, INTS6, INTS7, INTS8, INTS9/RC74, INTS10, INTS11/CPSF3L, INTS12, INTS13, INTS14 and INTS15. The core complex associates with protein phosphatase 2A subunits PPP2CA and PPP2R1A, to form the Integrator-PP2A (INTAC) complex. Post-translationally, dephosphorylated at Ser-128 by the PNUTS-PP1 complex, promoting RNA polymerase II transcription pause-release.

The protein resides in the nucleus. In terms of biological role, component of the integrator complex, a multiprotein complex that terminates RNA polymerase II (Pol II) transcription in the promoter-proximal region of genes. The integrator complex provides a quality checkpoint during transcription elongation by driving premature transcription termination of transcripts that are unfavorably configured for transcriptional elongation: the complex terminates transcription by (1) catalyzing dephosphorylation of the C-terminal domain (CTD) of Pol II subunit POLR2A/RPB1 and SUPT5H/SPT5, (2) degrading the exiting nascent RNA transcript via endonuclease activity and (3) promoting the release of Pol II from bound DNA. The integrator complex is also involved in terminating the synthesis of non-coding Pol II transcripts, such as enhancer RNAs (eRNAs), small nuclear RNAs (snRNAs), telomerase RNAs and long non-coding RNAs (lncRNAs). Mediates recruitment of cytoplasmic dynein to the nuclear envelope, probably as component of the integrator complex. The sequence is that of Integrator complex subunit 12 (INTS12) from Pongo abelii (Sumatran orangutan).